We begin with the raw amino-acid sequence, 718 residues long: Polyribonucleotide nucleotidyltransferase (718 aa).

Mg(2+) is bound by residues Asp506 and Asp512. Positions 572–632 constitute a KH domain; that stretch reads PKLELFSVDP…EQIKAAKDYI (61 aa). In terms of domain architecture, S1 motif spans 657 to 718; it reads GQEFQGIVKK…NGKISVDLCE (62 aa).

This sequence belongs to the polyribonucleotide nucleotidyltransferase family. It depends on Mg(2+) as a cofactor.

The protein localises to the cytoplasm. The catalysed reaction is RNA(n+1) + phosphate = RNA(n) + a ribonucleoside 5'-diphosphate. Its function is as follows. Involved in mRNA degradation. Catalyzes the phosphorolysis of single-stranded polyribonucleotides processively in the 3'- to 5'-direction. In Campylobacter jejuni subsp. doylei (strain ATCC BAA-1458 / RM4099 / 269.97), this protein is Polyribonucleotide nucleotidyltransferase.